We begin with the raw amino-acid sequence, 361 residues long: S-adenosylmethionine:tRNA ribosyltransferase-isomerase (361 aa).

The protein belongs to the QueA family. Monomer.

Its subcellular location is the cytoplasm. It carries out the reaction 7-aminomethyl-7-carbaguanosine(34) in tRNA + S-adenosyl-L-methionine = epoxyqueuosine(34) in tRNA + adenine + L-methionine + 2 H(+). It participates in tRNA modification; tRNA-queuosine biosynthesis. Functionally, transfers and isomerizes the ribose moiety from AdoMet to the 7-aminomethyl group of 7-deazaguanine (preQ1-tRNA) to give epoxyqueuosine (oQ-tRNA). The chain is S-adenosylmethionine:tRNA ribosyltransferase-isomerase from Methylocella silvestris (strain DSM 15510 / CIP 108128 / LMG 27833 / NCIMB 13906 / BL2).